Consider the following 334-residue polypeptide: Glycerol-3-phosphate dehydrogenase [NAD(P)+] (334 aa).

NADPH is bound by residues Ser-14, Tyr-15, His-35, and Lys-109. Residues Lys-109, Gly-138, and Thr-140 each contribute to the sn-glycerol 3-phosphate site. Residue Ala-142 participates in NADPH binding. Sn-glycerol 3-phosphate is bound by residues Lys-194, Asp-247, Ser-257, Arg-258, and Asn-259. The Proton acceptor role is filled by Lys-194. Arg-258 is a binding site for NADPH. 2 residues coordinate NADPH: Val-282 and Glu-284.

This sequence belongs to the NAD-dependent glycerol-3-phosphate dehydrogenase family.

It is found in the cytoplasm. It catalyses the reaction sn-glycerol 3-phosphate + NAD(+) = dihydroxyacetone phosphate + NADH + H(+). The enzyme catalyses sn-glycerol 3-phosphate + NADP(+) = dihydroxyacetone phosphate + NADPH + H(+). The protein operates within membrane lipid metabolism; glycerophospholipid metabolism. Functionally, catalyzes the reduction of the glycolytic intermediate dihydroxyacetone phosphate (DHAP) to sn-glycerol 3-phosphate (G3P), the key precursor for phospholipid synthesis. The protein is Glycerol-3-phosphate dehydrogenase [NAD(P)+] of Aeromonas hydrophila subsp. hydrophila (strain ATCC 7966 / DSM 30187 / BCRC 13018 / CCUG 14551 / JCM 1027 / KCTC 2358 / NCIMB 9240 / NCTC 8049).